Here is a 482-residue protein sequence, read N- to C-terminus: ATP synthase subunit beta (482 aa).

162 to 169 contributes to the ATP binding site; the sequence is GGAGVGKT.

Belongs to the ATPase alpha/beta chains family. F-type ATPases have 2 components, CF(1) - the catalytic core - and CF(0) - the membrane proton channel. CF(1) has five subunits: alpha(3), beta(3), gamma(1), delta(1), epsilon(1). CF(0) has four main subunits: a(1), b(1), b'(1) and c(9-12).

The protein resides in the cellular thylakoid membrane. The enzyme catalyses ATP + H2O + 4 H(+)(in) = ADP + phosphate + 5 H(+)(out). Produces ATP from ADP in the presence of a proton gradient across the membrane. The catalytic sites are hosted primarily by the beta subunits. This is ATP synthase subunit beta from Nostoc sp. (strain PCC 7120 / SAG 25.82 / UTEX 2576).